The chain runs to 516 residues: Threonine synthase 2, chloroplastic (516 aa).

Residues 1 to 33 (MASFSLPHSATYFPSHSETSLKPHSAASFTVRC) constitute a chloroplast transit peptide. Over residues 1–37 (MASFSLPHSATYFPSHSETSLKPHSAASFTVRCTSAS) the composition is skewed to polar residues. A disordered region spans residues 1-55 (MASFSLPHSATYFPSHSETSLKPHSAASFTVRCTSASPAVPPQTPQKPRRSPDEN). Residues 133–135 (PYG), 156–158 (SAF), N163, L164, K172, and N178 contribute to the S-adenosyl-L-methionine site. The residue at position 194 (K194) is an N6-(pyridoxal phosphate)lysine. Residues 326 to 330 (GNLGN) and T464 contribute to the pyridoxal 5'-phosphate site.

The protein belongs to the threonine synthase family. As to quaternary structure, homodimer. Requires pyridoxal 5'-phosphate as cofactor.

Its subcellular location is the plastid. It is found in the chloroplast. It catalyses the reaction O-phospho-L-homoserine + H2O = L-threonine + phosphate. The protein operates within amino-acid biosynthesis; L-threonine biosynthesis; L-threonine from L-aspartate: step 5/5. With respect to regulation, allosterically activated by S-adenosyl-methionine (SAM). Catalyzes the gamma-elimination of phosphate from L-phosphohomoserine and the beta-addition of water to produce L-threonine. The chain is Threonine synthase 2, chloroplastic (TS2) from Arabidopsis thaliana (Mouse-ear cress).